We begin with the raw amino-acid sequence, 310 residues long: Ribosomal RNA small subunit methyltransferase H (310 aa).

S-adenosyl-L-methionine contacts are provided by residues 47–49 (GGH), aspartate 66, phenylalanine 93, aspartate 108, and glutamine 115.

This sequence belongs to the methyltransferase superfamily. RsmH family.

Its subcellular location is the cytoplasm. It catalyses the reaction cytidine(1402) in 16S rRNA + S-adenosyl-L-methionine = N(4)-methylcytidine(1402) in 16S rRNA + S-adenosyl-L-homocysteine + H(+). In terms of biological role, specifically methylates the N4 position of cytidine in position 1402 (C1402) of 16S rRNA. The protein is Ribosomal RNA small subunit methyltransferase H of Prochlorococcus marinus (strain MIT 9303).